A 601-amino-acid polypeptide reads, in one-letter code: Glutathione-regulated potassium-efflux system protein KefB (601 aa).

The next 13 membrane-spanning stretches (helical) occupy residues 4-24 (SDFL…VPLA), 29-49 (IGAV…GLGF), 55-75 (EILH…GLEL), 87-107 (IFGV…GLLM), 115-135 (AAVV…LQLM), 152-172 (VLLF…LLAG), 177-197 (HFDW…LIGG), 207-227 (FIAA…LVLG), 230-250 (LFMD…GVLL), 268-288 (GLLL…GVLY), 291-311 (LLWV…VLYL), 324-344 (MQFA…FSTA), and 356-376 (ALLL…MKLV). An RCK N-terminal domain is found at 400–519 (KPQVIVVGFG…AGVTQFSRET (120 aa)).

It belongs to the monovalent cation:proton antiporter 2 (CPA2) transporter (TC 2.A.37) family. KefB subfamily. In terms of assembly, interacts with the regulatory subunit KefG.

It is found in the cell inner membrane. Pore-forming subunit of a potassium efflux system that confers protection against electrophiles. Catalyzes K(+)/H(+) antiport. The polypeptide is Glutathione-regulated potassium-efflux system protein KefB (Escherichia coli O139:H28 (strain E24377A / ETEC)).